The primary structure comprises 339 residues: Ribosomal RNA large subunit methyltransferase F (339 aa).

The disordered stretch occupies residues 1 to 26 (MTAPSTPKPQRKKPKTATTAKPVVPR).

It belongs to the methyltransferase superfamily. METTL16/RlmF family.

It is found in the cytoplasm. It catalyses the reaction adenosine(1618) in 23S rRNA + S-adenosyl-L-methionine = N(6)-methyladenosine(1618) in 23S rRNA + S-adenosyl-L-homocysteine + H(+). Functionally, specifically methylates the adenine in position 1618 of 23S rRNA. The protein is Ribosomal RNA large subunit methyltransferase F of Pseudomonas fluorescens (strain SBW25).